Consider the following 714-residue polypeptide: Fatty acid oxidation complex subunit alpha (714 aa).

Residues 1 to 190 form an enoyl-CoA hydratase region; it reads MEMASVFTLN…KLGLVDDVVP (190 aa). The interval 306 to 714 is 3-hydroxyacyl-CoA dehydrogenase; sequence APLNSVGILG…FWKTTATDLQ (409 aa).

It in the N-terminal section; belongs to the enoyl-CoA hydratase/isomerase family. In the central section; belongs to the 3-hydroxyacyl-CoA dehydrogenase family. In terms of assembly, heterotetramer of two alpha chains (FadJ) and two beta chains (FadI).

The protein resides in the cytoplasm. The catalysed reaction is a (3S)-3-hydroxyacyl-CoA = a (2E)-enoyl-CoA + H2O. The enzyme catalyses a 4-saturated-(3S)-3-hydroxyacyl-CoA = a (3E)-enoyl-CoA + H2O. It carries out the reaction a (3S)-3-hydroxyacyl-CoA + NAD(+) = a 3-oxoacyl-CoA + NADH + H(+). It catalyses the reaction (3S)-3-hydroxybutanoyl-CoA = (3R)-3-hydroxybutanoyl-CoA. Its pathway is lipid metabolism; fatty acid beta-oxidation. Functionally, catalyzes the formation of a hydroxyacyl-CoA by addition of water on enoyl-CoA. Also exhibits 3-hydroxyacyl-CoA epimerase and 3-hydroxyacyl-CoA dehydrogenase activities. This is Fatty acid oxidation complex subunit alpha from Escherichia coli (strain SE11).